A 119-amino-acid polypeptide reads, in one-letter code: Beta-2-microglobulin (119 aa).

A signal peptide spans 1–21; it reads MGKAAAVVLVTLVALLGLAQA. An Ig-like C1-type domain is found at 25–113; sequence PKVQVYSRFP…HETLKEPQVY (89 aa). A disulfide bridge links Cys-45 with Cys-100.

It belongs to the beta-2-microglobulin family. Heterodimer of an alpha chain and a beta chain. Beta-2-microglobulin is the beta-chain of major histocompatibility complex class I molecules.

The protein resides in the secreted. Functionally, component of the class I major histocompatibility complex (MHC). Involved in the presentation of peptide antigens to the immune system. The polypeptide is Beta-2-microglobulin (B2M) (Gallus gallus (Chicken)).